Reading from the N-terminus, the 528-residue chain is MADRREKSADQMKLWKESRANQKPDVLTTGGGNPVSDKLNLLTVGPRGPLLVQDVVFTDEMAHFDRERIPERVVHAKGAGAFGYFEVTHDITRYSKAKVFEFIGKRTPIAVRFSTVAGEAGSADTVRDPRGFAVKFYTEDGNWDLTGNNTPIFFVRDAMLFPSFIHSQKRNPQTHMKDPDMVWDFWALRPESLHQVSFLFSDRGIPDGHRHMNGYGSHTFKLVNAKDEPIYCKFHFKTDQGIRNLTVEEANRLSAEDPDYGIHDLYEAIANGNYPSWTFYIQVMTFEQAERYPFNPFDLTKIWPHKDYPLIPVGKLVLNRNPANYFAEVEQIAFDPSNMPPGIEPSPDKMLQGRLFSYPDTHRHRLGANYLQLPVNCPYKARVANYQRDGPMCFSDNQGGAPNYFPNSFSAPENQPAARESKFRVSADVARYNSSDDDNVSQVRDFYTKVLSEEERKRLCENIAGHLKGAQIFIQKRAVKNFTDVHPDYGNRVQALLDKYNAEGHHKKVIKTYTQHSAHVTANDKANL.

Basic and acidic residues predominate over residues 1–22; it reads MADRREKSADQMKLWKESRANQ. The tract at residues 1–32 is disordered; sequence MADRREKSADQMKLWKESRANQKPDVLTTGGG. Active-site residues include histidine 75 and asparagine 148. Residues histidine 194, serine 201, arginine 203, asparagine 213, lysine 237, tryptophan 303, histidine 305, and lysine 306 each contribute to the NADP(+) site. Tyrosine 358 provides a ligand contact to heme. A Microbody targeting signal; atypical motif is present at residues 525 to 528; that stretch reads KANL.

Belongs to the catalase family. Homotetramer. The cofactor is heme. NADP(+) serves as cofactor.

The protein localises to the peroxisome matrix. The catalysed reaction is 2 H2O2 = O2 + 2 H2O. In terms of biological role, catalyzes the degradation of hydrogen peroxide (H(2)O(2)) generated by peroxisomal oxidases to water and oxygen, thereby protecting cells from the toxic effects of hydrogen peroxide. This Glandirana rugosa (Japanese wrinkled frog) protein is Catalase (cat).